We begin with the raw amino-acid sequence, 288 residues long: ATP synthase gamma chain (288 aa).

It belongs to the ATPase gamma chain family. F-type ATPases have 2 components, CF(1) - the catalytic core - and CF(0) - the membrane proton channel. CF(1) has five subunits: alpha(3), beta(3), gamma(1), delta(1), epsilon(1). CF(0) has three main subunits: a, b and c.

The protein localises to the cell inner membrane. Functionally, produces ATP from ADP in the presence of a proton gradient across the membrane. The gamma chain is believed to be important in regulating ATPase activity and the flow of protons through the CF(0) complex. The chain is ATP synthase gamma chain from Aliivibrio salmonicida (strain LFI1238) (Vibrio salmonicida (strain LFI1238)).